A 500-amino-acid polypeptide reads, in one-letter code: Enolase (500 aa).

Histidine 225 and glutamate 234 together coordinate substrate. The active-site Proton donor is the glutamate 277. Mg(2+) contacts are provided by aspartate 312, glutamate 361, and aspartate 386. Substrate is bound by residues glutamate 361 and aspartate 386. Catalysis depends on lysine 411, which acts as the Proton acceptor. Residues 438–441 (SHRS) and lysine 462 contribute to the substrate site.

The protein belongs to the enolase family. In terms of assembly, homodimer. Mg(2+) serves as cofactor.

Its subcellular location is the cytoplasm. It carries out the reaction (2R)-2-phosphoglycerate = phosphoenolpyruvate + H2O. It functions in the pathway carbohydrate degradation; glycolysis; pyruvate from D-glyceraldehyde 3-phosphate: step 4/5. Functionally, enzyme of the glycolytic pathway. Glycolysis is essential in glial cells but not in neurons; neurons rely on the citric acid cycle for their energy needs, and on lactate and alanine secreted into the hemolymph by glial cells to fuel it. In Drosophila melanogaster (Fruit fly), this protein is Enolase.